The primary structure comprises 168 residues: Cell division inhibitor SulA (168 aa).

A ftsZ binding region spans residues Ala105–Tyr111. Residues Arg161–His168 form a lon protease binding region.

This sequence belongs to the SulA family. Interacts with FtsZ. In terms of processing, is rapidly cleaved and degraded by the Lon protease once DNA damage is repaired.

Functionally, component of the SOS system and an inhibitor of cell division. Accumulation of SulA causes rapid cessation of cell division and the appearance of long, non-septate filaments. In the presence of GTP, binds a polymerization-competent form of FtsZ in a 1:1 ratio, thus inhibiting FtsZ polymerization and therefore preventing it from participating in the assembly of the Z ring. This mechanism prevents the premature segregation of damaged DNA to daughter cells during cell division. This chain is Cell division inhibitor SulA, found in Cronobacter turicensis (strain DSM 18703 / CCUG 55852 / LMG 23827 / z3032).